The chain runs to 371 residues: Histidinol-phosphate aminotransferase (371 aa).

At K228 the chain carries N6-(pyridoxal phosphate)lysine.

Belongs to the class-II pyridoxal-phosphate-dependent aminotransferase family. Histidinol-phosphate aminotransferase subfamily. Pyridoxal 5'-phosphate serves as cofactor.

It catalyses the reaction L-histidinol phosphate + 2-oxoglutarate = 3-(imidazol-4-yl)-2-oxopropyl phosphate + L-glutamate. The protein operates within amino-acid biosynthesis; L-histidine biosynthesis; L-histidine from 5-phospho-alpha-D-ribose 1-diphosphate: step 7/9. This Methanococcus maripaludis (strain C7 / ATCC BAA-1331) protein is Histidinol-phosphate aminotransferase.